We begin with the raw amino-acid sequence, 592 residues long: Arginine--tRNA ligase (592 aa).

The short motif at 139–149 is the 'HIGH' region element; the sequence is ANPNGPLHIGH.

It belongs to the class-I aminoacyl-tRNA synthetase family.

It localises to the cytoplasm. It carries out the reaction tRNA(Arg) + L-arginine + ATP = L-arginyl-tRNA(Arg) + AMP + diphosphate. The polypeptide is Arginine--tRNA ligase (Methanopyrus kandleri (strain AV19 / DSM 6324 / JCM 9639 / NBRC 100938)).